Reading from the N-terminus, the 208-residue chain is FMN-dependent NADH:quinone oxidoreductase 1 (208 aa).

Residue 17-19 (SVS) participates in FMN binding.

The protein belongs to the azoreductase type 1 family. Homodimer. The cofactor is FMN.

The enzyme catalyses 2 a quinone + NADH + H(+) = 2 a 1,4-benzosemiquinone + NAD(+). It catalyses the reaction N,N-dimethyl-1,4-phenylenediamine + anthranilate + 2 NAD(+) = 2-(4-dimethylaminophenyl)diazenylbenzoate + 2 NADH + 2 H(+). Functionally, quinone reductase that provides resistance to thiol-specific stress caused by electrophilic quinones. Its function is as follows. Also exhibits azoreductase activity. Catalyzes the reductive cleavage of the azo bond in aromatic azo compounds to the corresponding amines. This Listeria monocytogenes serovar 1/2a (strain ATCC BAA-679 / EGD-e) protein is FMN-dependent NADH:quinone oxidoreductase 1.